Consider the following 362-residue polypeptide: Biotin synthase (362 aa).

The disordered stretch occupies residues 14–39 (AQRTPEPLPPTSQGLARPSHDVVRGP). In terms of domain architecture, Radical SAM core spans 87-316 (HKGGPAALCG…ARDILVCGGR (230 aa)). 3 residues coordinate [4Fe-4S] cluster: cysteine 105, cysteine 109, and cysteine 112. Residues cysteine 181 and cysteine 241 each contribute to the [2Fe-2S] cluster site.

It belongs to the radical SAM superfamily. Biotin synthase family. In terms of assembly, homodimer. [4Fe-4S] cluster serves as cofactor. [2Fe-2S] cluster is required as a cofactor.

It catalyses the reaction (4R,5S)-dethiobiotin + (sulfur carrier)-SH + 2 reduced [2Fe-2S]-[ferredoxin] + 2 S-adenosyl-L-methionine = (sulfur carrier)-H + biotin + 2 5'-deoxyadenosine + 2 L-methionine + 2 oxidized [2Fe-2S]-[ferredoxin]. It participates in cofactor biosynthesis; biotin biosynthesis; biotin from 7,8-diaminononanoate: step 2/2. Catalyzes the conversion of dethiobiotin (DTB) to biotin by the insertion of a sulfur atom into dethiobiotin via a radical-based mechanism. The protein is Biotin synthase of Nitratidesulfovibrio vulgaris (strain ATCC 29579 / DSM 644 / CCUG 34227 / NCIMB 8303 / VKM B-1760 / Hildenborough) (Desulfovibrio vulgaris).